A 518-amino-acid chain; its full sequence is Integrator complex subunit 14 (518 aa).

One can recognise a VWFA domain in the interval Pro2–Leu204. Residues Ser10, Ser12, and Thr86 each contribute to the Mg(2+) site.

This sequence belongs to the Integrator subunit 14 family. As to quaternary structure, component of the Integrator complex, composed of core subunits INTS1, INTS2, INTS3, INTS4, INTS5, INTS6, INTS7, INTS8, INTS9/RC74, INTS10, INTS11/CPSF3L, INTS12, INTS13, INTS14 and INTS15. The core complex associates with protein phosphatase 2A subunits PPP2CA and PPP2R1A, to form the Integrator-PP2A (INTAC) complex. INTS14 is part of the tail subcomplex, composed of INTS10, INTS13, INTS14 and INTS15.

Its subcellular location is the nucleus. Component of the integrator complex, a multiprotein complex that terminates RNA polymerase II (Pol II) transcription in the promoter-proximal region of genes. The integrator complex provides a quality checkpoint during transcription elongation by driving premature transcription termination of transcripts that are unfavorably configured for transcriptional elongation: the complex terminates transcription by (1) catalyzing dephosphorylation of the C-terminal domain (CTD) of Pol II subunit POLR2A/RPB1 and SUPT5H/SPT5, (2) degrading the exiting nascent RNA transcript via endonuclease activity and (3) promoting the release of Pol II from bound DNA. The integrator complex is also involved in terminating the synthesis of non-coding Pol II transcripts, such as enhancer RNAs (eRNAs), small nuclear RNAs (snRNAs), telomerase RNAs and long non-coding RNAs (lncRNAs). Within the integrator complex, INTS14 is part of the integrator tail module that acts as a platform for the recruitment of transcription factors at promoters. This chain is Integrator complex subunit 14, found in Xenopus tropicalis (Western clawed frog).